The primary structure comprises 337 residues: Protein FAM169B (337 aa).

The disordered stretch occupies residues 278–326; it reads STVHPKCSEEDTDTPGQASQEDGPTQFNHGESHKEWAVGEPERTQNGRR. The span at 291–306 shows a compositional bias: polar residues; that stretch reads TPGQASQEDGPTQFNH. Residues 307 to 322 are compositionally biased toward basic and acidic residues; it reads GESHKEWAVGEPERTQ.

Belongs to the FAM169 family.

In Mus musculus (Mouse), this protein is Protein FAM169B (Fam169b).